A 218-amino-acid polypeptide reads, in one-letter code: 3-phospho-D-glycerate guanylyltransferase (218 aa).

It belongs to the CofC family.

The catalysed reaction is (2R)-3-phosphoglycerate + GTP + H(+) = 3-[(R)-glyceryl]-diphospho-5'-guanosine + diphosphate. The protein operates within cofactor biosynthesis; coenzyme F420 biosynthesis. Its function is as follows. Guanylyltransferase that catalyzes the activation of (2R)-3-phosphoglycerate (3PG) as 3-[(R)-glyceryl]-diphospho-5'-guanosine, via the condensation of 3PG with GTP. It is involved in the biosynthesis of a derivative of the hydride carrier cofactor coenzyme F420, 3PG-F420. The chain is 3-phospho-D-glycerate guanylyltransferase from Phenylobacterium zucineum (strain HLK1).